The following is a 351-amino-acid chain: Prostaglandin reductase 2 (351 aa).

99-100 (FY) lines the substrate pocket. NADP(+) is bound by residues 165–168 (GACG), Lys192, Tyr208, Asn231, 253–259 (CGQISQY), 287–289 (FMV), and Asn337. Substrate is bound at residue 288-290 (MVL).

It belongs to the NADP-dependent oxidoreductase L4BD family. As to quaternary structure, monomer.

It is found in the cytoplasm. It carries out the reaction 13,14-dihydro-15-oxo-prostaglandin E2 + NAD(+) = 15-oxoprostaglandin E2 + NADH + H(+). The catalysed reaction is 13,14-dihydro-15-oxo-prostaglandin E2 + NADP(+) = 15-oxoprostaglandin E2 + NADPH + H(+). The enzyme catalyses 13,14-dihydro-15-oxo-PGF2alpha + NADP(+) = 15-oxoprostaglandin F2alpha + NADPH + H(+). It catalyses the reaction 13,14-dihydro-15-oxo-prostaglandin E1 + NADP(+) = 15-oxoprostaglandin E1 + NADPH + H(+). It carries out the reaction 13,14-dihydro-15-oxo-prostaglandin F1alpha + NADP(+) = 15-oxoprostaglandin F1alpha + NADPH + H(+). Functionally, functions as 15-oxo-prostaglandin 13-reductase and acts on 15-keto-PGE1, 15-keto-PGE2, 15-keto-PGE1-alpha and 15-keto-PGE2-alpha with highest activity towards 15-keto-PGE2. Overexpression represses transcriptional activity of PPARG and inhibits adipocyte differentiation. This Rattus norvegicus (Rat) protein is Prostaglandin reductase 2.